The chain runs to 280 residues: Bis(5'-nucleosyl)-tetraphosphatase, symmetrical (280 aa).

The protein belongs to the Ap4A hydrolase family.

The catalysed reaction is P(1),P(4)-bis(5'-adenosyl) tetraphosphate + H2O = 2 ADP + 2 H(+). In terms of biological role, hydrolyzes diadenosine 5',5'''-P1,P4-tetraphosphate to yield ADP. This chain is Bis(5'-nucleosyl)-tetraphosphatase, symmetrical, found in Shigella boydii serotype 18 (strain CDC 3083-94 / BS512).